Here is a 294-residue protein sequence, read N- to C-terminus: Nucleotide-binding protein Maqu_2718 (294 aa).

Glycine 8 to serine 15 provides a ligand contact to ATP. Aspartate 61–asparagine 64 contacts GTP.

The protein belongs to the RapZ-like family.

In terms of biological role, displays ATPase and GTPase activities. The polypeptide is Nucleotide-binding protein Maqu_2718 (Marinobacter nauticus (strain ATCC 700491 / DSM 11845 / VT8) (Marinobacter aquaeolei)).